Consider the following 278-residue polypeptide: MSDTEEQEYEEEQPEEEAAEEEEEAPEEPEPVAEPEEERPKPSRPVVPPLIPPKIPEGERVDFDDIHRKRMEKDLLELQTLIDVHFEQRKKEEEELVALKERIERRRSERAEQQRFRTEKERERQAKLAEEKMRKEEEEAKKRAEDDAKKKKVLSNMGAHFGGYLVKAEQKRGKRQTGREMKVRILSERKKPLDIDYMGEEQLRARSAWLPPSQPSCPAREKAQELSDWIHQLESEKFDLMAKLKQQKYEINVLYNRISHAQKFRKGAGKGRVGGRWK.

The segment covering 1–37 has biased composition (acidic residues); sequence MSDTEEQEYEEEQPEEEAAEEEEEAPEEPEPVAEPEE. Disordered stretches follow at residues 1 to 63 and 105 to 153; these read MSDT…RVDF and RRRS…KKKV. Serine 2 bears the Phosphoserine; by CK2 mark. Residues 43–55 are compositionally biased toward pro residues; it reads SRPVVPPLIPPKI. A compositionally biased stretch (basic and acidic residues) spans 105 to 149; it reads RRRSERAEQQRFRTEKERERQAKLAEEKMRKEEEEAKKRAEDDAK.

Belongs to the troponin T family. Interacts with TPM3.

Functionally, troponin T is the tropomyosin-binding subunit of troponin, the thin filament regulatory complex which confers calcium-sensitivity to striated muscle actomyosin ATPase activity. The sequence is that of Troponin T, slow skeletal muscle (TNNT1) from Homo sapiens (Human).